The sequence spans 142 residues: Large ribosomal subunit protein uL13 (142 aa).

The protein belongs to the universal ribosomal protein uL13 family. In terms of assembly, part of the 50S ribosomal subunit.

Its function is as follows. This protein is one of the early assembly proteins of the 50S ribosomal subunit, although it is not seen to bind rRNA by itself. It is important during the early stages of 50S assembly. This is Large ribosomal subunit protein uL13 from Hahella chejuensis (strain KCTC 2396).